Reading from the N-terminus, the 613-residue chain is MTEASARTIGPLPSRFSRDPKTPRSTDNAAAALLLAFTVLAILWANSPWAQSYSIFWDTDVAVSFGEYRAELSVKHLVNDGLMAFFFFIVGLEVKSEFVIGELTDRSRAAVPVVAAIAGLIVPAVIFLTFNPSGPDAQAWGVVISTDTAFLVGALAVIKPKFPARLRIFLLTLAVVDDVGALGAIALFYTDDLKLAPLAVAALLIAALAMVRRLPSLRGPAYAVLGFALWIALYLAHVHPTLAGVAVAVLIPVFTPERRQVEQTVDLVRAFRQSPNPQYARAVTRGLRESISINERLQTAVGPYVSFVVLPIFALANAGVHLDEQTITAAMSSTLTWGIVAGLVVGKFVGITAATALMSATGWGQLAPGLSLRRVAGGAALSGIGFTISLFIVDVAIEDPARQDEARVGVLIASVLAFTLSWALFRITDWISPPEPVGLTLVRPVDPERDHIRGDPDAPLVLVEYGDYECPFCGRATGAIDEVRTHFGDDLLYVWRHFPLERAHPRSFDAARASEGAAAQGKFFEMGRELFAHQDDLEWSDMYRYAVAIGLDIEQFDQDVRVHASKVLHRVRDDAQDAEVMDLNSTPTFFVNGKRHKGPWDAASLIRALEAGR.

Residues 1 to 23 form a disordered region; the sequence is MTEASARTIGPLPSRFSRDPKTP. A na(+)/H(+) antiporter NhaA region spans residues 1-408; that stretch reads MTEASARTIG…DPARQDEARV (408 aa). 11 helical membrane-spanning segments follow: residues 29–49, 81–101, 110–130, 138–158, 168–188, 191–211, 231–251, 300–320, 337–357, 377–397, and 408–428; these read AAAA…NSPW, GLMA…FVIG, AVPV…FLTF, QAWG…LAVI, IFLL…IALF, DDLK…LAMV, IALY…AVLI, AVGP…NAGV, WGIV…ATAL, GGAA…DVAI, and VGVL…FRIT. The Thioredoxin domain occupies 409-613; sequence GVLIASVLAF…SLIRALEAGR (205 aa).

This sequence in the N-terminal section; belongs to the NhaA Na(+)/H(+) (TC 2.A.33) antiporter family.

It is found in the cell membrane. The catalysed reaction is Na(+)(in) + 2 H(+)(out) = Na(+)(out) + 2 H(+)(in). Its function is as follows. Na(+)/H(+) antiporter that extrudes sodium in exchange for external protons. The sequence is that of Na(+)/H(+) antiporter NhaA 1 from Mycobacterium sp. (strain KMS).